Reading from the N-terminus, the 114-residue chain is Iron-sulfur cluster insertion protein ErpA (114 aa).

Residues C42, C106, and C108 each contribute to the iron-sulfur cluster site.

It belongs to the HesB/IscA family. As to quaternary structure, homodimer. The cofactor is iron-sulfur cluster.

Required for insertion of 4Fe-4S clusters for at least IspG. In Proteus mirabilis (strain HI4320), this protein is Iron-sulfur cluster insertion protein ErpA.